The following is a 142-amino-acid chain: Immunoglobulin omega chain (142 aa).

A signal peptide spans 1–19 (MAWTSVLLMLLAHLTGCGP). Positions 20 to 41 (QPMVHQPPSASSSLGATIRLSC) are framework-1. Cysteine 41 and cysteine 115 are joined by a disulfide. The complementarity-determining-1 stretch occupies residues 42–56 (TLSNDHNIGIYSIYW). The framework-2 stretch occupies residues 57–70 (YQQRPGHPPRFLLR). Residues 71–81 (YFSHSDKHQGP) are complementarity-determining-2. The segment at 82 to 115 (DIPPRFSGSKDTARNLGYLSISELQPEDEAVYYC) is framework-3.

This sequence belongs to the immunoglobulin superfamily. As to expression, only expressed by pre-B-cells.

Functionally, associates with the Ig-mu chain to form a molecular complex that is expressed on the surface of pre-B-cells. This complex presumably regulates Ig gene rearrangements in the early steps of B-cell differentiation. This Mus musculus (Mouse) protein is Immunoglobulin omega chain.